A 63-amino-acid polypeptide reads, in one-letter code: Large ribosomal subunit protein uL30 (63 aa).

The protein belongs to the universal ribosomal protein uL30 family. In terms of assembly, part of the 50S ribosomal subunit.

In Bradyrhizobium sp. (strain ORS 278), this protein is Large ribosomal subunit protein uL30.